Consider the following 419-residue polypeptide: Hydrolase LUC6 (419 aa).

Serine 238 is an active-site residue.

It belongs to the AB hydrolase superfamily. FUS2 hydrolase family.

It participates in mycotoxin biosynthesis. Hydrolase; part of the gene cluster that mediates the biosynthesis of the mycotoxin lucilactaene and the lucilactaene-related compound NG-391 that act as cell cycle inhibitors with potent growth inhibitory activity against malarial parasites, moderate growth inhibitory activity against cancer cells, and no activity against bacteria and fungi. Within the pathway, LUC6 may catalyze the 2-pyrrolidone ring formation to form prelucilactaene C from prelucilactaene B, followed by C-15 hydroxylation by the same enzyme to give prelucilactaene D, epoxydation to yield prelucilactaene E, and finally cyclization to yield prelucilactaene F. The pathway begins with the hybrid PKS-NRPS synthetase LUC5 which is responsible for the condensation of one acetyl-coenzyme A (CoA) unit with six malonyl-CoA units and the amide linkage of the arising heptaketide and homoserine, subsequently releasing the first intermediate prelucilactaene B. Both the cytochrome P450 monooxygenase LUC2 and the hydrolase LUC6 function in parallel in modification of prelucilactaene B. LUC6 may catalyze the 2-pyrrolidone ring formation to form prelucilactaene C from prelucilactaene B, followed by C-15 hydroxylation by the same enzyme to give prelucilactaene D, which is then converted to prelucilactaene E by epoxidation, and finally to prelucilactaene F by cyclization. Prelucilactane D, prelucilactaene E, and prelucilactaene F can be converted to dihydrolucilactaene, NG391, and lucilactaene, respectively, via C-20 methyl group hydroxylation by the cytochrome P450 monooxygenase LUC2. However, LUC2, unlike FUS8 in fusarin C biosynthesis, is not enough for the full oxidation of the C-20 methyl group into carboxylic acid, which is a prerequisite for the final methylation step. The aldehyde dehydrogenase LUC3 is involved in the biosynthesis by further oxidation of the C-20 alcoholic analog prelucilactaene G into a carboxylic derivative. This unidentified carboxylic derivative may be converted to demethyllucilactaene. As the last step, the methyltransferase LUC1 methylates the hydroxyl group at C-21 of demethyllucilactaene to generate lucilactaene. In Fusarium sp, this protein is Hydrolase LUC6.